The following is a 100-amino-acid chain: Small ribosomal subunit protein uS14c (100 aa).

The protein belongs to the universal ribosomal protein uS14 family. In terms of assembly, part of the 30S ribosomal subunit.

Its subcellular location is the plastid. It is found in the chloroplast. Binds 16S rRNA, required for the assembly of 30S particles. In Thalassiosira pseudonana (Marine diatom), this protein is Small ribosomal subunit protein uS14c.